Consider the following 196-residue polypeptide: HTH-type transcriptional regulator EcpR (196 aa).

The 59-residue stretch at 138–196 folds into the HTH luxR-type domain; that stretch reads KDIKKDKITDREMEIIRMTAQGMLPKSIARIENCSVKTVYTHRRNAEAKLYSKIYKLVP. Positions 162–181 form a DNA-binding region, H-T-H motif; the sequence is PKSIARIENCSVKTVYTHRR.

It belongs to the EcpR/MatA family.

It is found in the cytoplasm. Part of the ecpRABCDE operon, which encodes the E.coli common pilus (ECP). ECP is found in both commensal and pathogenic strains and plays a dual role in early-stage biofilm development and host cell recognition. Positively regulates the expression of the ecp operon. In Escherichia coli O17:K52:H18 (strain UMN026 / ExPEC), this protein is HTH-type transcriptional regulator EcpR (ecpR).